A 429-amino-acid polypeptide reads, in one-letter code: Enolase (429 aa).

(2R)-2-phosphoglycerate is bound at residue glutamine 163. Glutamate 205 (proton donor) is an active-site residue. 3 residues coordinate Mg(2+): aspartate 242, glutamate 286, and aspartate 313. Positions 338, 367, 368, and 389 each coordinate (2R)-2-phosphoglycerate. Lysine 338 (proton acceptor) is an active-site residue.

Belongs to the enolase family. The cofactor is Mg(2+).

It is found in the cytoplasm. The protein resides in the secreted. It localises to the cell surface. The enzyme catalyses (2R)-2-phosphoglycerate = phosphoenolpyruvate + H2O. The protein operates within carbohydrate degradation; glycolysis; pyruvate from D-glyceraldehyde 3-phosphate: step 4/5. In terms of biological role, catalyzes the reversible conversion of 2-phosphoglycerate (2-PG) into phosphoenolpyruvate (PEP). It is essential for the degradation of carbohydrates via glycolysis. This is Enolase from Geotalea uraniireducens (strain Rf4) (Geobacter uraniireducens).